We begin with the raw amino-acid sequence, 339 residues long: 7,8-didemethyl-8-hydroxy-5-deazariboflavin synthase (339 aa).

The Radical SAM core domain maps to 25 to 256 (ATYSPAYTIV…PDITIQIPPN (232 aa)). Residues C39, C43, and C46 each contribute to the [4Fe-4S] cluster site.

The protein belongs to the radical SAM superfamily. CofG family. As to quaternary structure, consists of two subunits, CofG and CofH. [4Fe-4S] cluster serves as cofactor.

The catalysed reaction is 5-amino-5-(4-hydroxybenzyl)-6-(D-ribitylimino)-5,6-dihydrouracil + S-adenosyl-L-methionine = 7,8-didemethyl-8-hydroxy-5-deazariboflavin + 5'-deoxyadenosine + L-methionine + NH4(+) + H(+). It participates in cofactor biosynthesis; coenzyme F0 biosynthesis. In terms of biological role, catalyzes the radical-mediated synthesis of 7,8-didemethyl-8-hydroxy-5-deazariboflavin from 5-amino-5-(4-hydroxybenzyl)-6-(D-ribitylimino)-5,6-dihydrouracil. The sequence is that of 7,8-didemethyl-8-hydroxy-5-deazariboflavin synthase from Nostoc sp. (strain PCC 7120 / SAG 25.82 / UTEX 2576).